We begin with the raw amino-acid sequence, 389 residues long: Teichoic acid glycerol-phosphate transferase (389 aa).

This sequence belongs to the CDP-glycerol glycerophosphotransferase family.

The protein localises to the cell membrane. It carries out the reaction 4-O-[(2R)-glycerylphospho]-N-acetyl-beta-D-mannosaminyl-(1-&gt;4)-N-acetyl-alpha-D-glucosaminyl di-trans,octa-cis-undecaprenyl diphosphate + CDP-glycerol = 4-O-[di(2R)-glycerylphospho]-N-acetyl-beta-D-mannosaminyl-(1-&gt;4)-N-acetyl-alpha-D-glucosaminyl di-trans,octa-cis-undecaprenyl diphosphate + CMP + H(+). Its pathway is cell wall biogenesis; poly(ribitol phosphate) teichoic acid biosynthesis. Catalyzes the addition of a second glycerol phosphate unit from CDP-glycerol to the prenolpyrophosphate-linked disaccharide, to complete the linkage unit. The protein is Teichoic acid glycerol-phosphate transferase (tarF) of Staphylococcus aureus (strain NCTC 8325 / PS 47).